A 348-amino-acid polypeptide reads, in one-letter code: DNA ligase C1 (348 aa).

The active-site N6-AMP-lysine intermediate is the lysine 32.

It belongs to the ATP-dependent DNA ligase family. It depends on a divalent metal cation as a cofactor.

It catalyses the reaction ATP + (deoxyribonucleotide)n-3'-hydroxyl + 5'-phospho-(deoxyribonucleotide)m = (deoxyribonucleotide)n+m + AMP + diphosphate.. In terms of biological role, DNA ligase that seals nicks in double-stranded DNA during DNA replication, DNA recombination and DNA repair. Has weak intrinsic nick joining activities and accumulates DNA-adenylate. Acts as a backup for LigD in the Ku-LigD-dependent NHEJ pathway. The chain is DNA ligase C1 (ligC) from Mycolicibacterium smegmatis (strain ATCC 700084 / mc(2)155) (Mycobacterium smegmatis).